The chain runs to 418 residues: Mitochondrial outer membrane protein SLC25A46 (418 aa).

Residues serine 32 and serine 35 each carry the phosphoserine modification. Position 45 is a phosphothreonine (threonine 45). The disordered stretch occupies residues 46-96 (PPDIPGSRNLHWGEKSPSYGVPSAPPTLEGSAEEPFPGGGEGPRPGPSSEQ). A Solcar 1 repeat occupies 96–187 (QLNRFAGFGI…GIISEFTPLP (92 aa)). 6 helical membrane passes run 103–123 (FGIGLASLFTENVLAHPCIVL), 167–187 (FIVQGVTLGAEGIISEFTPLP), 202–222 (HLLLKCLTYMVAMPFYSASLI), 258–278 (LLPLFSLIFPTVLHGVLHYII), 314–334 (FPELIANFAASLCSDVILYPL), and 382–402 (VFGFYKGFGAVIIQYTLHATI). The stretch at 311 to 413 (DAYFPELIAN…QITKMIYSTL (103 aa)) is one Solcar 2 repeat.

This sequence belongs to the mitochondrial carrier (TC 2.A.29) family. In terms of assembly, associates with the mitochondrial contact site and cristae organizing system (MICOS) complex. May associate with the endoplasmic reticulum membrane protein complex (EMC).

The protein localises to the mitochondrion outer membrane. Its function is as follows. Transmembrane protein of the mitochondrial outer membrane that controls mitochondrial organization. May regulate the assembly of the MICOS (mitochondrial contact site and cristae organizing system) complex which is essential to the biogenesis and dynamics of mitochondrial cristae, the inwards folds of the inner mitochondrial membrane. Through its interaction with the EMC (endoplasmic reticulum membrane protein complex), could regulate mitochondrial lipid homeostasis and thereby mitochondrial fission. This is Mitochondrial outer membrane protein SLC25A46 from Mus musculus (Mouse).